Here is a 285-residue protein sequence, read N- to C-terminus: Polyamine aminopropyltransferase (285 aa).

A PABS domain is found at Gln-2–Lys-237. Gln-31 is an S-methyl-5'-thioadenosine binding site. Asp-86 is a binding site for spermidine. S-methyl-5'-thioadenosine-binding positions include Glu-106 and Asp-137–Gly-138. The active-site Proton acceptor is the Asp-155. Asp-155 to Asp-158 is a spermidine binding site.

It belongs to the spermidine/spermine synthase family. Homodimer or homotetramer.

The protein localises to the cytoplasm. It catalyses the reaction S-adenosyl 3-(methylsulfanyl)propylamine + putrescine = S-methyl-5'-thioadenosine + spermidine + H(+). It participates in amine and polyamine biosynthesis; spermidine biosynthesis; spermidine from putrescine: step 1/1. Its function is as follows. Catalyzes the irreversible transfer of a propylamine group from the amino donor S-adenosylmethioninamine (decarboxy-AdoMet) to putrescine (1,4-diaminobutane) to yield spermidine. The protein is Polyamine aminopropyltransferase of Agathobacter rectalis (strain ATCC 33656 / DSM 3377 / JCM 17463 / KCTC 5835 / VPI 0990) (Eubacterium rectale).